The primary structure comprises 351 residues: Methylthioribose-1-phosphate isomerase (351 aa).

Residues 53 to 55, Arg96, and Gln205 contribute to the substrate site; that span reads RGA. The active-site Proton donor is Asp246. 256–257 serves as a coordination point for substrate; it reads NK.

The protein belongs to the eIF-2B alpha/beta/delta subunits family. MtnA subfamily.

It carries out the reaction 5-(methylsulfanyl)-alpha-D-ribose 1-phosphate = 5-(methylsulfanyl)-D-ribulose 1-phosphate. Its pathway is amino-acid biosynthesis; L-methionine biosynthesis via salvage pathway; L-methionine from S-methyl-5-thio-alpha-D-ribose 1-phosphate: step 1/6. Its function is as follows. Catalyzes the interconversion of methylthioribose-1-phosphate (MTR-1-P) into methylthioribulose-1-phosphate (MTRu-1-P). This Synechocystis sp. (strain ATCC 27184 / PCC 6803 / Kazusa) protein is Methylthioribose-1-phosphate isomerase.